The following is a 776-amino-acid chain: Meiotic expression up-regulated protein 1/2 (776 aa).

5 coiled-coil regions span residues 87-122, 173-227, 265-307, 362-430, and 496-595; these read YVLK…AQEE, FSEL…DLKE, YKVE…NDEE, KMSQ…RNNS, and INNQ…NTEL.

The chain is Meiotic expression up-regulated protein 1/2 (meu1) from Schizosaccharomyces pombe (strain 972 / ATCC 24843) (Fission yeast).